The primary structure comprises 352 residues: Ion-translocating oxidoreductase complex subunit D (352 aa).

5 consecutive transmembrane segments (helical) span residues isoleucine 20 to glycine 40, glycine 42 to leucine 62, alanine 78 to alanine 109, proline 123 to leucine 143, and isoleucine 148 to alanine 168. The residue at position 187 (threonine 187) is an FMN phosphoryl threonine. A run of 4 helical transmembrane segments spans residues isoleucine 214–leucine 234, tryptophan 242–phenylalanine 262, leucine 267–leucine 287, and leucine 301–glycine 318.

It belongs to the NqrB/RnfD family. As to quaternary structure, the complex is composed of six subunits: RsxA, RsxB, RsxC, RsxD, RsxE and RsxG. The cofactor is FMN.

Its subcellular location is the cell inner membrane. Its function is as follows. Part of a membrane-bound complex that couples electron transfer with translocation of ions across the membrane. Required to maintain the reduced state of SoxR. This Shigella flexneri serotype 5b (strain 8401) protein is Ion-translocating oxidoreductase complex subunit D.